The primary structure comprises 336 residues: Fructose-1,6-bisphosphatase class 1 (336 aa).

Residues glutamate 91, aspartate 114, leucine 116, and aspartate 117 each contribute to the Mg(2+) site. Substrate is bound by residues 117 to 120, asparagine 210, tyrosine 243, and lysine 273; that span reads DGSS. Mg(2+) is bound at residue glutamate 279.

Belongs to the FBPase class 1 family. Homotetramer. Mg(2+) is required as a cofactor.

The protein resides in the cytoplasm. It carries out the reaction beta-D-fructose 1,6-bisphosphate + H2O = beta-D-fructose 6-phosphate + phosphate. Its pathway is carbohydrate biosynthesis; gluconeogenesis. The polypeptide is Fructose-1,6-bisphosphatase class 1 (Dichelobacter nodosus (strain VCS1703A)).